The sequence spans 220 residues: MCVFCEKKLFMHAIGLSGYSIREIVSSLDQPVSNSLVRNKGFVGKILELILGVNVLHGYKCIDFPSLGIELKSIPINSSGYPLEPTFICNIPLKNNSLNITWNNSYFYRKIKKILWIPIIGNRVVSFLDKIVGEAFIWTMSSVQEKILKKDWEEFMDLIIIGKVEYISSKHGQVLQVKKKCKNKHVCIKFINYNGCVKFTNPRAFYFRKSFTWSLLNLSK.

This sequence belongs to the MutH family.

The protein resides in the cytoplasm. Sequence-specific endonuclease that cleaves unmethylated GATC sequences. It is involved in DNA mismatch repair. This chain is DNA mismatch repair protein MutH, found in Buchnera aphidicola subsp. Baizongia pistaciae (strain Bp).